Reading from the N-terminus, the 195-residue chain is Thymidine kinase (195 aa).

ATP contacts are provided by residues 9-16 (ATMNAGKS) and 89-92 (DEAQ). Glutamate 90 serves as the catalytic Proton acceptor. Positions 147, 149, 184, and 187 each coordinate Zn(2+).

Belongs to the thymidine kinase family. As to quaternary structure, homotetramer.

Its subcellular location is the cytoplasm. The catalysed reaction is thymidine + ATP = dTMP + ADP + H(+). The protein is Thymidine kinase of Rhizobium meliloti (strain 1021) (Ensifer meliloti).